Consider the following 208-residue polypeptide: MIGLVGRKVGMTRVFTEDGVSIPVTVIEIEANRVTQVKTLENDGYSAIQVTTGSKKANRVTKPEAGHFVKAGVEAGRGLWEFRTEGEEFTLGQEINVDIFTDVKKVDVTGTSKGKGFQGGVKRWNFRTQDATHGNSLSHRVLGSIGQNQTPGRVFKGKKMAGHLGAERVTVQSLEVVRVDAERKLLLVKGAVPGATNSDVIVKPAVKA.

N5-methylglutamine is present on glutamine 149.

Belongs to the universal ribosomal protein uL3 family. In terms of assembly, part of the 50S ribosomal subunit. Forms a cluster with proteins L14 and L19. In terms of processing, methylated by PrmB.

Its function is as follows. One of the primary rRNA binding proteins, it binds directly near the 3'-end of the 23S rRNA, where it nucleates assembly of the 50S subunit. This Actinobacillus pleuropneumoniae serotype 5b (strain L20) protein is Large ribosomal subunit protein uL3.